Reading from the N-terminus, the 233-residue chain is Glyceraldehyde-3-phosphate dehydrogenase A, chloroplastic (233 aa).

Residues 49–51, threonine 80, arginine 95, 108–109, and arginine 131 contribute to the D-glyceraldehyde 3-phosphate site; these read SCT and TG. The active-site Nucleophile is the cysteine 50. Asparagine 213 serves as a coordination point for NADP(+).

This sequence belongs to the glyceraldehyde-3-phosphate dehydrogenase family. Tetramer of either four A chains (GAPDH 2) or two A and two B chains (GAPDH 1).

It is found in the plastid. Its subcellular location is the chloroplast. The catalysed reaction is D-glyceraldehyde 3-phosphate + phosphate + NADP(+) = (2R)-3-phospho-glyceroyl phosphate + NADPH + H(+). Its pathway is carbohydrate biosynthesis; Calvin cycle. The sequence is that of Glyceraldehyde-3-phosphate dehydrogenase A, chloroplastic (GAPA) from Sinapis alba (White mustard).